The following is a 598-amino-acid chain: Elongation factor 4 (598 aa).

One can recognise a tr-type G domain in the interval 3–185 (QHIRNFSIIA…MIVARIPPPE (183 aa)). GTP-binding positions include 15–20 (DHGKST) and 132–135 (NKID).

It belongs to the TRAFAC class translation factor GTPase superfamily. Classic translation factor GTPase family. LepA subfamily.

The protein localises to the cell inner membrane. The enzyme catalyses GTP + H2O = GDP + phosphate + H(+). Its function is as follows. Required for accurate and efficient protein synthesis under certain stress conditions. May act as a fidelity factor of the translation reaction, by catalyzing a one-codon backward translocation of tRNAs on improperly translocated ribosomes. Back-translocation proceeds from a post-translocation (POST) complex to a pre-translocation (PRE) complex, thus giving elongation factor G a second chance to translocate the tRNAs correctly. Binds to ribosomes in a GTP-dependent manner. This is Elongation factor 4 from Nitrosomonas eutropha (strain DSM 101675 / C91 / Nm57).